The following is a 957-amino-acid chain: Exoribonuclease II, mitochondrial (957 aa).

Residues 1-54 (MNYRQLFLLQNVNLESNYLLKRVCLSLKLSPCKLTRKFHHACPSSSKVLKYFRI) constitute a mitochondrion transit peptide. An RNB domain is found at 503-843 (RVDLRHLKAF…FTHHQIQSVL (341 aa)).

Belongs to the RNR ribonuclease family.

The protein localises to the mitochondrion. The enzyme catalyses Exonucleolytic cleavage in the 3'- to 5'-direction to yield nucleoside 5'-phosphates.. In terms of biological role, required for intron-independent turnover and processing of mitochondrial RNA. Participates in 3'-mtRNA processing where it hydrolyzes single-stranded RNA or partially double-stranded RNA with 3'-single-stranded tails. This is Exoribonuclease II, mitochondrial (rpm1) from Schizosaccharomyces pombe (strain 972 / ATCC 24843) (Fission yeast).